The chain runs to 522 residues: 2-isopropylmalate synthase (522 aa).

A Pyruvate carboxyltransferase domain is found at 5 to 267; sequence VIIFDTTLRD…ETGINAKEIH (263 aa). The Mn(2+) site is built by Asp14, His202, His204, and Asn238. The regulatory domain stretch occupies residues 392-522; sequence QLQQLVVQSD…MQKNRELGGV (131 aa).

This sequence belongs to the alpha-IPM synthase/homocitrate synthase family. LeuA type 1 subfamily. In terms of assembly, homodimer. Mn(2+) serves as cofactor.

It is found in the cytoplasm. It carries out the reaction 3-methyl-2-oxobutanoate + acetyl-CoA + H2O = (2S)-2-isopropylmalate + CoA + H(+). It participates in amino-acid biosynthesis; L-leucine biosynthesis; L-leucine from 3-methyl-2-oxobutanoate: step 1/4. Functionally, catalyzes the condensation of the acetyl group of acetyl-CoA with 3-methyl-2-oxobutanoate (2-ketoisovalerate) to form 3-carboxy-3-hydroxy-4-methylpentanoate (2-isopropylmalate). This Shewanella baltica (strain OS223) protein is 2-isopropylmalate synthase.